A 214-amino-acid chain; its full sequence is Ubiquitin-conjugating enzyme E2 21 (214 aa).

The 148-residue stretch at 21–168 (ARVTRKCKEV…AVYWTSYFAN (148 aa)) folds into the UBC core domain. The Glycyl thioester intermediate role is filled by Cys-106. Positions 172-214 (DVEPDFNRKVGRLIEMGIRETEAIVYLSCNNWKLEQALQFIFD) constitute a UBA domain.

Belongs to the ubiquitin-conjugating enzyme family.

It catalyses the reaction S-ubiquitinyl-[E1 ubiquitin-activating enzyme]-L-cysteine + [E2 ubiquitin-conjugating enzyme]-L-cysteine = [E1 ubiquitin-activating enzyme]-L-cysteine + S-ubiquitinyl-[E2 ubiquitin-conjugating enzyme]-L-cysteine.. It participates in protein modification; protein ubiquitination. Its function is as follows. Acts with E3 ubiquitin-protein ligase trim-21 to catalyze the 'Lys-48'-linked polyubiquitination of ced-1, promoting its proteasomal degradation to maintain appropriate ced-1 levels for apoptotic cell clearance. The protein is Ubiquitin-conjugating enzyme E2 21 (ubc-21) of Caenorhabditis elegans.